Reading from the N-terminus, the 734-residue chain is Amino-acid acetyltransferase, mitochondrial (734 aa).

A disordered region spans residues 384 to 433; sequence YSETSSRSTRAEADSNFNLRDDIPLSSFTEQKSGELEYSPRHQNDSPTQQ. 2 stretches are compositionally biased toward basic and acidic residues: residues 392 to 406 and 415 to 427; these read TRAE…RDDI and KSGE…RHQN. An N-acetyltransferase domain is found at 555 to 724; sequence GVPQISLTDP…YEAVCKTIEP (170 aa).

Belongs to the acetyltransferase family.

Its subcellular location is the mitochondrion. The enzyme catalyses L-glutamate + acetyl-CoA = N-acetyl-L-glutamate + CoA + H(+). The protein operates within amino-acid biosynthesis; L-arginine biosynthesis; N(2)-acetyl-L-ornithine from L-glutamate: step 1/4. N-acetylglutamate synthase involved in arginine biosynthesis. This Botryotinia fuckeliana (strain B05.10) (Noble rot fungus) protein is Amino-acid acetyltransferase, mitochondrial (arg2).